The following is a 455-amino-acid chain: Bifunctional protein GlmU (455 aa).

The interval 1–227 (MGLSVIILAA…CEEVQGVNDR (227 aa)) is pyrophosphorylase. UDP-N-acetyl-alpha-D-glucosamine contacts are provided by residues 8–11 (LAAG), Lys22, Gln73, 78–79 (GT), 100–102 (YGD), Gly137, Glu152, Asn167, and Asn225. Residue Asp102 participates in Mg(2+) binding. Mg(2+) is bound at residue Asn225. Residues 228–248 (WELTKLERYYQRLMAKKLSLA) form a linker region. The tract at residues 249-455 (GVTIIDPERF…KGWHRPTKKE (207 aa)) is N-acetyltransferase. Positions 332 and 350 each coordinate UDP-N-acetyl-alpha-D-glucosamine. His362 functions as the Proton acceptor in the catalytic mechanism. UDP-N-acetyl-alpha-D-glucosamine contacts are provided by Tyr365 and Asn376. Acetyl-CoA-binding positions include Ala379, 385–386 (NY), Ser404, Ala422, and Arg439.

This sequence in the N-terminal section; belongs to the N-acetylglucosamine-1-phosphate uridyltransferase family. It in the C-terminal section; belongs to the transferase hexapeptide repeat family. In terms of assembly, homotrimer. Mg(2+) is required as a cofactor.

It localises to the cytoplasm. The catalysed reaction is alpha-D-glucosamine 1-phosphate + acetyl-CoA = N-acetyl-alpha-D-glucosamine 1-phosphate + CoA + H(+). It catalyses the reaction N-acetyl-alpha-D-glucosamine 1-phosphate + UTP + H(+) = UDP-N-acetyl-alpha-D-glucosamine + diphosphate. Its pathway is nucleotide-sugar biosynthesis; UDP-N-acetyl-alpha-D-glucosamine biosynthesis; N-acetyl-alpha-D-glucosamine 1-phosphate from alpha-D-glucosamine 6-phosphate (route II): step 2/2. It participates in nucleotide-sugar biosynthesis; UDP-N-acetyl-alpha-D-glucosamine biosynthesis; UDP-N-acetyl-alpha-D-glucosamine from N-acetyl-alpha-D-glucosamine 1-phosphate: step 1/1. The protein operates within bacterial outer membrane biogenesis; LPS lipid A biosynthesis. In terms of biological role, catalyzes the last two sequential reactions in the de novo biosynthetic pathway for UDP-N-acetylglucosamine (UDP-GlcNAc). The C-terminal domain catalyzes the transfer of acetyl group from acetyl coenzyme A to glucosamine-1-phosphate (GlcN-1-P) to produce N-acetylglucosamine-1-phosphate (GlcNAc-1-P), which is converted into UDP-GlcNAc by the transfer of uridine 5-monophosphate (from uridine 5-triphosphate), a reaction catalyzed by the N-terminal domain. This chain is Bifunctional protein GlmU, found in Coxiella burnetii (strain CbuK_Q154) (Coxiella burnetii (strain Q154)).